We begin with the raw amino-acid sequence, 450 residues long: NADP-specific glutamate dehydrogenase (450 aa).

Residue Lys-111 is part of the active site.

Belongs to the Glu/Leu/Phe/Val dehydrogenases family. Homohexamer.

It carries out the reaction L-glutamate + NADP(+) + H2O = 2-oxoglutarate + NH4(+) + NADPH + H(+). The protein is NADP-specific glutamate dehydrogenase (GDHA) of Laccaria bicolor (strain S238N-H82 / ATCC MYA-4686) (Bicoloured deceiver).